We begin with the raw amino-acid sequence, 169 residues long: Lipoprotein signal peptidase (169 aa).

The next 4 helical transmembrane spans lie at 4 to 24, 42 to 62, 70 to 90, and 102 to 122; these read PICSTGLRWLWLAVLVVIVDL, LIPFFNLTYAQNFGAAFSFLA, WFFAGIAIGISVLLMVLMYRS, and ALIIGGALGNLFDRMVHGAVI. Catalysis depends on residues aspartate 123 and aspartate 141. The helical transmembrane segment at 137-157 threads the bilayer; it reads FNIADTAICIGAALVIFEGFI.

Belongs to the peptidase A8 family.

The protein resides in the cell inner membrane. The catalysed reaction is Release of signal peptides from bacterial membrane prolipoproteins. Hydrolyzes -Xaa-Yaa-Zaa-|-(S,diacylglyceryl)Cys-, in which Xaa is hydrophobic (preferably Leu), and Yaa (Ala or Ser) and Zaa (Gly or Ala) have small, neutral side chains.. Its pathway is protein modification; lipoprotein biosynthesis (signal peptide cleavage). Functionally, this protein specifically catalyzes the removal of signal peptides from prolipoproteins. This chain is Lipoprotein signal peptidase, found in Yersinia enterocolitica serotype O:8 / biotype 1B (strain NCTC 13174 / 8081).